A 184-amino-acid chain; its full sequence is ATP synthase subunit b (184 aa).

A helical transmembrane segment spans residues 19–39; sequence IIVGVILVLLLTWLIAKAVVP.

The protein belongs to the ATPase B chain family. In terms of assembly, F-type ATPases have 2 components, F(1) - the catalytic core - and F(0) - the membrane proton channel. F(1) has five subunits: alpha(3), beta(3), gamma(1), delta(1), epsilon(1). F(0) has three main subunits: a(1), b(2) and c(10-14). The alpha and beta chains form an alternating ring which encloses part of the gamma chain. F(1) is attached to F(0) by a central stalk formed by the gamma and epsilon chains, while a peripheral stalk is formed by the delta and b chains.

The protein localises to the cell membrane. Its function is as follows. F(1)F(0) ATP synthase produces ATP from ADP in the presence of a proton or sodium gradient. F-type ATPases consist of two structural domains, F(1) containing the extramembraneous catalytic core and F(0) containing the membrane proton channel, linked together by a central stalk and a peripheral stalk. During catalysis, ATP synthesis in the catalytic domain of F(1) is coupled via a rotary mechanism of the central stalk subunits to proton translocation. In terms of biological role, component of the F(0) channel, it forms part of the peripheral stalk, linking F(1) to F(0). The chain is ATP synthase subunit b from Cutibacterium acnes (strain DSM 16379 / KPA171202) (Propionibacterium acnes).